Consider the following 225-residue polypeptide: Uracil-DNA glycosylase 1 (225 aa).

The active-site Proton acceptor is aspartate 68.

Belongs to the uracil-DNA glycosylase (UDG) superfamily. UNG family.

It localises to the cytoplasm. The catalysed reaction is Hydrolyzes single-stranded DNA or mismatched double-stranded DNA and polynucleotides, releasing free uracil.. Its function is as follows. Excises uracil residues from the DNA which can arise as a result of misincorporation of dUMP residues by DNA polymerase or due to deamination of cytosine. The sequence is that of Uracil-DNA glycosylase 1 (ung1) from Streptomyces coelicolor (strain ATCC BAA-471 / A3(2) / M145).